Reading from the N-terminus, the 466-residue chain is Cysteine--tRNA ligase (466 aa).

Cys29 contacts Zn(2+). The 'HIGH' region signature appears at 31 to 41 (PTVYNYIHIGN). Zn(2+) is bound by residues Cys209, His234, and Glu238. The 'KMSKS' region motif lies at 266–270 (KMSKS). Lys269 serves as a coordination point for ATP. Phosphoserine is present on Ser270.

Belongs to the class-I aminoacyl-tRNA synthetase family. Monomer. Zn(2+) serves as cofactor.

The protein resides in the cytoplasm. It catalyses the reaction tRNA(Cys) + L-cysteine + ATP = L-cysteinyl-tRNA(Cys) + AMP + diphosphate. This Halalkalibacterium halodurans (strain ATCC BAA-125 / DSM 18197 / FERM 7344 / JCM 9153 / C-125) (Bacillus halodurans) protein is Cysteine--tRNA ligase (cysS).